The following is a 510-amino-acid chain: Serine carboxypeptidase 1 (510 aa).

The signal sequence occupies residues 1–25 (MARRGRRSLASPAVAIALFVFLAYG). The propeptide occupies 26 to 36 (GGGGGGGVCEA). 3 disulfides stabilise this stretch: Cys98/Cys399, Cys262/Cys274, and Cys297/Cys366. Asn154 carries an N-linked (GlcNAc...) asparagine glycan. Ser194 is an active-site residue. The N-linked (GlcNAc...) asparagine glycan is linked to Asn268. Positions 303-362 (IKKVTPANTKLPKSFQHLGTTTKPLAVRTRMHGRAWPLRAPVRAGRVPSWQEFARGSRPS) are cleaved as a propeptide — linker peptide. An N-linked (GlcNAc...) asparagine glycan is attached at Asn418. Catalysis depends on residues Asp434 and His487. The Microbody targeting signal motif lies at 508–510 (SKL).

The protein belongs to the peptidase S10 family.

It catalyses the reaction Release of a C-terminal amino acid with broad specificity.. The sequence is that of Serine carboxypeptidase 1 (CBP1) from Oryza sativa subsp. japonica (Rice).